The sequence spans 452 residues: Protein EARLY-RESPONSIVE TO DEHYDRATION 7, chloroplastic (452 aa).

The segment covering 1–18 (MESSGDKQTSSLYPTVDT) has biased composition (polar residues). A chloroplast-targeting transit peptide spans 1-28 (MESSGDKQTSSLYPTVDTSNPEAPINPS). A disordered region spans residues 1 to 37 (MESSGDKQTSSLYPTVDTSNPEAPINPSSSSSTNNLY). Over residues 19–37 (SNPEAPINPSSSSSTNNLY) the composition is skewed to low complexity. One can recognise a Senescence domain in the interval 258 to 426 (IATGSGHLIK…AWVAFKIRKA (169 aa)).

The protein localises to the plastid. It localises to the chloroplast. The protein is Protein EARLY-RESPONSIVE TO DEHYDRATION 7, chloroplastic of Arabidopsis thaliana (Mouse-ear cress).